Here is a 149-residue protein sequence, read N- to C-terminus: Nucleoside diphosphate kinase (149 aa).

ATP-binding residues include K9, F57, R85, T91, R102, and N112. H115 serves as the catalytic Pros-phosphohistidine intermediate.

The protein belongs to the NDK family. Homotetramer. Requires Mg(2+) as cofactor.

It localises to the cytoplasm. The enzyme catalyses a 2'-deoxyribonucleoside 5'-diphosphate + ATP = a 2'-deoxyribonucleoside 5'-triphosphate + ADP. It carries out the reaction a ribonucleoside 5'-diphosphate + ATP = a ribonucleoside 5'-triphosphate + ADP. In terms of biological role, major role in the synthesis of nucleoside triphosphates other than ATP. The ATP gamma phosphate is transferred to the NDP beta phosphate via a ping-pong mechanism, using a phosphorylated active-site intermediate. This is Nucleoside diphosphate kinase from Herpetosiphon aurantiacus (strain ATCC 23779 / DSM 785 / 114-95).